Consider the following 508-residue polypeptide: MVHADGHNFPGSDPNPHMNKFAFGCAIVASIISIIFGYDTGVMSGAQIFIRDDLKINDTQIEVLAGILNLCALVGSLTAGKTSDVIGRRYTIALSAVIFLVGSVLMGYGPNYPVLMVGRCIAGVGVGFALMIAPVYSAEISSASHRGFLTSLPELCISLGILLGYVSNYCFGKLTLKLGWRLMLGIAAFPSLILAFGITRMPESPRWLVMQGRLEEAKKIMVLVSNTEEEAEERFRDILTAAEVDVTEIKEVGGGVKKKNHGKSVWRELVIKPRPAVRLILIAAVGIHFFEHATGIEAVVLYSPRIFKKAGVVSKDKLLLATVGVGLTKAFFIIIATFLLDKVGRRKLLLTSTGGMVFALTSLAVSLTMVQRFGRLAWALSLSIVSTYAFVAFFSIGLGPITWVYSSEIFPLRLRAQGASIGVAVNRIMNATVSMSFLSMTKAITTGGVFFVFAGIAVAAWWFFFFMLPETKGLPLEEMEKLFGGGGPRGDRDGLEIQTKTISIGGFS.

12 helical membrane passes run 21 to 41, 60 to 80, 90 to 110, 120 to 140, 147 to 167, 178 to 198, 280 to 300, 318 to 338, 348 to 368, 384 to 404, 418 to 438, and 448 to 468; these read FAFG…YDTG, QIEV…LTAG, YTIA…GYGP, CIAG…SAEI, GFLT…GYVS, LGWR…AFGI, ILIA…EAVV, LLLA…IATF, LLLT…VSLT, IVST…ITWV, GASI…MSFL, and GVFF…FFML.

The protein belongs to the major facilitator superfamily. Sugar transporter (TC 2.A.1.1) family.

It is found in the membrane. Functionally, plasma membrane sugar-proton symporter. This Arabidopsis thaliana (Mouse-ear cress) protein is Probable polyol transporter 3 (PLT3).